The sequence spans 211 residues: 1-deoxy-D-xylulose 5-phosphate reductoisomerase (211 aa).

D14 serves as a coordination point for Mn(2+). Positions 15, 16, 40, 63, 76, 81, 82, and 85 each coordinate 1-deoxy-D-xylulose 5-phosphate. Position 16 (E16) interacts with Mn(2+). E85 lines the Mn(2+) pocket.

It belongs to the DXR family. It depends on Mn(2+) as a cofactor. Requires Mg(2+) as cofactor. Mostly expressed in flowers and, to a lower extent, in leaves.

It is found in the plastid. It localises to the chloroplast stroma. It carries out the reaction 2-C-methyl-D-erythritol 4-phosphate + NADP(+) = 1-deoxy-D-xylulose 5-phosphate + NADPH + H(+). It participates in isoprenoid biosynthesis; isopentenyl diphosphate biosynthesis via DXP pathway; isopentenyl diphosphate from 1-deoxy-D-xylulose 5-phosphate: step 1/6. Functionally, enzyme of the plastid non-mevalonate pathway for isoprenoid biosynthesis that catalyzes the NADPH-dependent rearrangement and reduction of 1-deoxy-D-xylulose-5-phosphate (DXP) to 2-C-methyl-D-erythritol 4-phosphate (MEP). Required for chloroplast development. The sequence is that of 1-deoxy-D-xylulose 5-phosphate reductoisomerase from Thymus vulgaris (Thyme).